Consider the following 385-residue polypeptide: Glutamate 5-kinase (385 aa).

An ATP-binding site is contributed by Lys-17. Substrate is bound by residues Ser-64, Asp-151, and Asn-165. 185-186 (SD) is an ATP binding site. One can recognise a PUA domain in the interval 291–367 (SGTVRVDAGA…DQIENVLGYS (77 aa)).

Belongs to the glutamate 5-kinase family.

The protein resides in the cytoplasm. The catalysed reaction is L-glutamate + ATP = L-glutamyl 5-phosphate + ADP. The protein operates within amino-acid biosynthesis; L-proline biosynthesis; L-glutamate 5-semialdehyde from L-glutamate: step 1/2. Catalyzes the transfer of a phosphate group to glutamate to form L-glutamate 5-phosphate. This chain is Glutamate 5-kinase, found in Methanosarcina mazei (strain ATCC BAA-159 / DSM 3647 / Goe1 / Go1 / JCM 11833 / OCM 88) (Methanosarcina frisia).